Consider the following 257-residue polypeptide: Outer dense fiber protein 4 (257 aa).

A disordered region spans residues 1-41 (MDAEYSGNEFPRSEGERDQHQRPGKERKSGEAGWGTGELGQ). Residues 11–30 (PRSEGERDQHQRPGKERKSG) show a composition bias toward basic and acidic residues. Ser-64 is subject to Phosphoserine. 3 helical membrane passes run 80–100 (AQVL…VVAF), 152–172 (VTFI…FELE), and 179–199 (IGWS…CAIL).

As to expression, expressed in testis and sperm; especially localized to sperm tail (at protein level).

It localises to the membrane. In terms of biological role, component of the outer dense fibers (ODF) of spermatozoa which could be involved in sperm tail structure, sperm movement and general organization of cellular cytoskeleton. The polypeptide is Outer dense fiber protein 4 (ODF4) (Homo sapiens (Human)).